The following is a 758-amino-acid chain: MQNWETTATTNYEQHNAWYNSMFAANIKQEPGHHLDGNSVASSPRQSPIPSTNHLEQFLKQQQQQLQQQPMDTLCAMTPSPSQNDQNSLQHYDANLQQQLLQQQQYQQHFQAAQQQHHHHHHLMGGFNPLTPPGLPNPMQHFYGGNLRPSPQPTPTSASTIAPVAVATGSSEKLQALTPPMDVTPPKSPAKSSQSNIEPEKEHDQMSNSSEDMKYMAESEDDDTNIRMPIYNSHGKMKNYKCKTCGVVAITKVDFWAHTRTHMKPDKILQCPKCPFVTEFKHHLEYHIRKHKNQKPFQCDKCSYTCVNKSMLNSHRKSHSSVYQYRCADCDYATKYCHSFKLHLRKYGHKPGMVLDEDGTPNPSLVIDVYGTRRGPKSKNGGPIASGGSGSGSRKSNVAAVAPQQQQSQPAQPVATSQLSAALQGFPLVQGNSAPPAASPVLPLPASPAKSVASVEQTPSLPSPANLLPPLASLLQQNRNMAFFPYWNLNLQMLAAQQQAAVLAQLSPRMREQLQQQNQQQSDNEEEEQDDEYERKSVDSAMDLSQGTPVKEDEQQQQPQQPLAMNLKVEEEATPLMSSSNASRRKGRVLKLDTLLQLRSEAMTSPEQLKVPSTPMPTASSPIAGRKPMPEEHCSGTSSADESMETAHVPQANTSASSTASSSGNSSNASSNSNGNSSSNSSSNGTTSAVAAPPSGTPAAAGAIYECKYCDIFFKDAVLYTIHMGYHSCDDVFKCNMCGEKCDGPVGLFVHMARNAHS.

Disordered stretches follow at residues 30–51 and 172–214; these read EPGHHLDGNSVASSPRQSPIPS and EKLQ…EDMK. Over residues 39–51 the composition is skewed to polar residues; the sequence is SVASSPRQSPIPS. Thr-178 carries the phosphothreonine modification. Residues Ser-188, Ser-207, Ser-209, and Ser-210 each carry the phosphoserine modification. Residues 198–214 are compositionally biased toward basic and acidic residues; that stretch reads EPEKEHDQMSNSSEDMK. 4 C2H2-type zinc fingers span residues 240–262, 269–291, 297–319, and 325–349; these read YKCKTCGVVAITKVDFWAHTRTH, LQCPKCPFVTEFKHHLEYHIRKH, FQCDKCSYTCVNKSMLNSHRKSH, and YRCADCDYATKYCHSFKLHLRKYGH. 2 disordered regions span residues 365 to 416 and 513 to 536; these read LVID…PVAT and QLQQQNQQQSDNEEEEQDDEYERK. Low complexity-rich tracts occupy residues 398–415 and 513–522; these read VAAVAPQQQQSQPAQPVA and QLQQQNQQQS. Residues 523-532 are compositionally biased toward acidic residues; it reads DNEEEEQDDE. Ser-537 and Ser-540 each carry phosphoserine. Residues 603-695 form a disordered region; sequence MTSPEQLKVP…TTSAVAAPPS (93 aa). The segment covering 652–695 has biased composition (low complexity); that stretch reads ANTSASSTASSSGNSSNASSNSNGNSSSNSSSNGTTSAVAAPPS. 2 C2H2-type zinc fingers span residues 705 to 727 and 733 to 757; these read YECKYCDIFFKDAVLYTIHMGYH and FKCNMCGEKCDGPVGLFVHMARNAH.

The protein belongs to the hunchback C2H2-type zinc-finger protein family. As to expression, in embryo, expression of maternal transcript is highest in anterior region. Zygotic transcript is expressed in anterior region until the beginning of gastrulation and in posterior region until early gastrulation. After this, it is expressed in developing nervous system.

The protein localises to the nucleus. Functionally, gap class segmentation protein that controls development of head structures. This Drosophila melanogaster (Fruit fly) protein is Protein hunchback.